The following is a 645-amino-acid chain: Acetyl-coenzyme A synthetase (645 aa).

CoA-binding positions include 190–193 (RGGR) and threonine 308. ATP is bound by residues 384-386 (GEP), 408-413 (DTWWQT), aspartate 497, and arginine 512. Serine 520 provides a ligand contact to CoA. ATP is bound at residue arginine 523. Residues valine 534, histidine 536, and valine 539 each coordinate Mg(2+). Lysine 606 is modified (N6-acetyllysine).

This sequence belongs to the ATP-dependent AMP-binding enzyme family. Mg(2+) is required as a cofactor. In terms of processing, acetylated. Deacetylation by the SIR2-homolog deacetylase activates the enzyme.

It catalyses the reaction acetate + ATP + CoA = acetyl-CoA + AMP + diphosphate. Catalyzes the conversion of acetate into acetyl-CoA (AcCoA), an essential intermediate at the junction of anabolic and catabolic pathways. AcsA undergoes a two-step reaction. In the first half reaction, AcsA combines acetate with ATP to form acetyl-adenylate (AcAMP) intermediate. In the second half reaction, it can then transfer the acetyl group from AcAMP to the sulfhydryl group of CoA, forming the product AcCoA. This Alkalilimnicola ehrlichii (strain ATCC BAA-1101 / DSM 17681 / MLHE-1) protein is Acetyl-coenzyme A synthetase.